Here is a 318-residue protein sequence, read N- to C-terminus: MIDLSPLARRLAGTPLATWANGLQAQLDAKMEKGHGDLERWQSALDALPKIQPSEIDLINGLRLDTDCDDATRAQMRTALMGLSPWRKGPFDLFGVHVDTEWRSDWKWSRVAPHLNLEGKRILDVGCGNGYYMWRMLGAGAHSVIGVDPNWLFFCQFQAVQRYLSEPSVWHLPFPFEDLPANLEGFDTVFSMGVFYHRRSPIEHLLALKDCLVKGGELVLETLVVEGDQHQVLVPEDRYAQMRNVWFLPSVPALELWLRRAGFSDVRCVDVSVTSIEEQRGTEWMKYQSLSDFLDPNDHSKTIEGLPAPMRAVIVAKK.

Residues Lys88, Trp102, Lys107, Gly126, Met192, Tyr196, and Arg311 each coordinate carboxy-S-adenosyl-L-methionine.

It belongs to the class I-like SAM-binding methyltransferase superfamily. CmoB family. In terms of assembly, homotetramer.

It catalyses the reaction carboxy-S-adenosyl-L-methionine + 5-hydroxyuridine(34) in tRNA = 5-carboxymethoxyuridine(34) in tRNA + S-adenosyl-L-homocysteine + H(+). Catalyzes carboxymethyl transfer from carboxy-S-adenosyl-L-methionine (Cx-SAM) to 5-hydroxyuridine (ho5U) to form 5-carboxymethoxyuridine (cmo5U) at position 34 in tRNAs. The sequence is that of tRNA U34 carboxymethyltransferase from Pseudomonas fluorescens (strain ATCC BAA-477 / NRRL B-23932 / Pf-5).